The chain runs to 199 residues: NAD(P)H dehydrogenase (quinone) (199 aa).

A Flavodoxin-like domain is found at valine 4 to isoleucine 190. Residues serine 10 to isoleucine 15 and threonine 78 to phenylalanine 80 each bind FMN. Residue tyrosine 12 coordinates NAD(+). Residue tryptophan 98 participates in substrate binding. FMN-binding positions include serine 113–glycine 119 and histidine 134.

This sequence belongs to the WrbA family. The cofactor is FMN.

The enzyme catalyses a quinone + NADH + H(+) = a quinol + NAD(+). The catalysed reaction is a quinone + NADPH + H(+) = a quinol + NADP(+). This chain is NAD(P)H dehydrogenase (quinone), found in Bradyrhizobium diazoefficiens (strain JCM 10833 / BCRC 13528 / IAM 13628 / NBRC 14792 / USDA 110).